The primary structure comprises 312 residues: Porphobilinogen deaminase (312 aa).

Cysteine 235 is subject to S-(dipyrrolylmethanemethyl)cysteine.

This sequence belongs to the HMBS family. As to quaternary structure, monomer. Dipyrromethane serves as cofactor.

The catalysed reaction is 4 porphobilinogen + H2O = hydroxymethylbilane + 4 NH4(+). The protein operates within porphyrin-containing compound metabolism; protoporphyrin-IX biosynthesis; coproporphyrinogen-III from 5-aminolevulinate: step 2/4. Functionally, tetrapolymerization of the monopyrrole PBG into the hydroxymethylbilane pre-uroporphyrinogen in several discrete steps. This is Porphobilinogen deaminase from Mycolicibacterium gilvum (strain PYR-GCK) (Mycobacterium gilvum (strain PYR-GCK)).